Reading from the N-terminus, the 427-residue chain is Histidinol dehydrogenase (427 aa).

3 residues coordinate NAD(+): tyrosine 127, glutamine 187, and asparagine 210. Substrate-binding residues include serine 233, glutamine 255, and histidine 258. Glutamine 255 and histidine 258 together coordinate Zn(2+). Residues glutamate 323 and histidine 324 each act as proton acceptor in the active site. Substrate-binding residues include histidine 324, aspartate 357, glutamate 411, and histidine 416. Aspartate 357 is a binding site for Zn(2+). Histidine 416 contacts Zn(2+).

Belongs to the histidinol dehydrogenase family. Zn(2+) is required as a cofactor.

The enzyme catalyses L-histidinol + 2 NAD(+) + H2O = L-histidine + 2 NADH + 3 H(+). Its pathway is amino-acid biosynthesis; L-histidine biosynthesis; L-histidine from 5-phospho-alpha-D-ribose 1-diphosphate: step 9/9. Catalyzes the sequential NAD-dependent oxidations of L-histidinol to L-histidinaldehyde and then to L-histidine. The polypeptide is Histidinol dehydrogenase (Streptococcus mutans serotype c (strain ATCC 700610 / UA159)).